The chain runs to 614 residues: Serine/threonine-protein kinase-like protein E (614 aa).

The 390-residue stretch at 15–404 (YLIQLHLGQN…NPNTNGAPLS (390 aa)) folds into the Protein kinase domain. 21 to 29 (LGQNSLGQQ) serves as a coordination point for ATP. The segment covering 256–269 (PEQTDNGVGKSSTG) has biased composition (polar residues). The interval 256–284 (PEQTDNGVGKSSTGEPPFPTVHQSPESSS) is disordered.

This sequence belongs to the protein kinase superfamily. Ser/Thr protein kinase family.

Functionally, lacks protein kinase activity. In Synechocystis sp. (strain ATCC 27184 / PCC 6803 / Kazusa), this protein is Serine/threonine-protein kinase-like protein E (spkE).